An 88-amino-acid chain; its full sequence is Small ribosomal subunit protein bS20 (88 aa).

This sequence belongs to the bacterial ribosomal protein bS20 family.

Its function is as follows. Binds directly to 16S ribosomal RNA. The sequence is that of Small ribosomal subunit protein bS20 from Desulforudis audaxviator (strain MP104C).